The chain runs to 408 residues: WD repeat-containing protein JIP5 (408 aa).

WD repeat units follow at residues 5 to 44, 50 to 86, 87 to 130, 133 to 172, 177 to 216, and 221 to 267; these read PVGS…DSHN, PSKR…TTDI, DARS…SVKT, QHFD…PKVV, DQED…GDCV, and GHPL…FLGV. The disordered stretch occupies residues 311–408; that stretch reads VDSDEEEDDE…VIDKDFFDGL (98 aa). Acidic residues-rich tracts occupy residues 313–339 and 356–366; these read SDEE…EDEE and DESDDEDEEME. The span at 396–408 shows a compositional bias: basic and acidic residues; it reads KETVIDKDFFDGL.

This sequence belongs to the WD repeat WDR55 family.

The protein resides in the nucleus. It is found in the nucleolus. The protein is WD repeat-containing protein JIP5 (JIP5) of Coprinopsis cinerea (strain Okayama-7 / 130 / ATCC MYA-4618 / FGSC 9003) (Inky cap fungus).